We begin with the raw amino-acid sequence, 438 residues long: RNA polymerase sigma factor SigA (438 aa).

A compositionally biased stretch (basic residues) spans 1–11 (MKKSKSKKKAA). Positions 1 to 69 (MKKSKSKKKA…PLDLEGPLEA (69 aa)) are disordered. Basic and acidic residues predominate over residues 12–26 (KAQEVEVKEPVKEPE). Composition is skewed to acidic residues over residues 27 to 45 (PLPE…EPDP) and 52 to 69 (PELE…PLEA). A sigma-70 factor domain-1 region spans residues 93–128 (SDPVRQYLHEIGQVPLLTLEEEIDLARKVEEGMEAI). Residues 202–272 (LIEANLRLVV…NRAIADQART (71 aa)) are sigma-70 factor domain-2. Residues 226–229 (DLIQ) carry the Interaction with polymerase core subunit RpoC motif. Residues 281 to 359 (ETINKLSRTA…DENLPSPVEA (79 aa)) are sigma-70 factor domain-3. Residues 372 to 424 (ALSKLSEREAMVLKLRKGLIDGREHTLEEVGAYFGVTRERIRQIENKALRKLK) are sigma-70 factor domain-4. The H-T-H motif DNA-binding region spans 398-417 (LEEVGAYFGVTRERIRQIEN).

This sequence belongs to the sigma-70 factor family. RpoD/SigA subfamily. In terms of assembly, interacts transiently with the RNA polymerase catalytic core formed by RpoA, RpoB, RpoC and RpoZ (2 alpha, 1 beta, 1 beta' and 1 omega subunit) to form the RNA polymerase holoenzyme that can initiate transcription.

The protein resides in the cytoplasm. In terms of biological role, sigma factors are initiation factors that promote the attachment of RNA polymerase to specific initiation sites and are then released. This sigma factor is the primary sigma factor during exponential growth. The sequence is that of RNA polymerase sigma factor SigA from Thermus aquaticus.